A 579-amino-acid polypeptide reads, in one-letter code: Peptidoglycan D,D-transpeptidase FtsI (579 aa).

Residues 15-35 (FCVIVGLLLAMVGAIVWRIVD) traverse the membrane as a helical segment. The active-site Acyl-ester intermediate is the Ser-294. A disordered region spans residues 558–579 (DNLPTATEQQQVNAAPAKGGRG). The segment covering 561–570 (PTATEQQQVN) has biased composition (polar residues).

This sequence belongs to the transpeptidase family. FtsI subfamily.

The protein resides in the cell inner membrane. It carries out the reaction Preferential cleavage: (Ac)2-L-Lys-D-Ala-|-D-Ala. Also transpeptidation of peptidyl-alanyl moieties that are N-acyl substituents of D-alanine.. The protein operates within cell wall biogenesis; peptidoglycan biosynthesis. In terms of biological role, catalyzes cross-linking of the peptidoglycan cell wall at the division septum. Binds penicillin. This is Peptidoglycan D,D-transpeptidase FtsI from Pseudomonas aeruginosa (strain ATCC 15692 / DSM 22644 / CIP 104116 / JCM 14847 / LMG 12228 / 1C / PRS 101 / PAO1).